The primary structure comprises 1196 residues: Phosphatidylinositol-3,5-bisphosphate 3-phosphatase MTMR3 (1196 aa).

A Phosphoserine modification is found at S8. The region spanning E155 to Y576 is the Myotubularin phosphatase domain. The a 1,2-diacyl-sn-glycero-3-phospho-(1D-myo-inositol-3,5-bisphosphate) site is built by N326, N351, and I352. A 1,2-diacyl-sn-glycero-3-phospho-(1D-myo-inositol-3-phosphate) contacts are provided by N326, N351, and I352. C413 acts as the Phosphocysteine intermediate in catalysis. The a 1,2-diacyl-sn-glycero-3-phospho-(1D-myo-inositol-3,5-bisphosphate) site is built by S414, D415, G416, W417, D418, R419, K455, and R459. Residues S414, D415, G416, W417, D418, and R419 each coordinate a 1,2-diacyl-sn-glycero-3-phospho-(1D-myo-inositol-3-phosphate). R459 serves as a coordination point for a 1,2-diacyl-sn-glycero-3-phospho-(1D-myo-inositol-3-phosphate). Residues D587–R612 form a disordered region. Positions Y593–P603 are enriched in pro residues. S613, S633, S647, and S651 each carry phosphoserine. Disordered stretches follow at residues T697 to E719 and E855 to S900. Position 907 is a phosphoserine (S907). Residues N993–P1008 show a composition bias toward polar residues. The segment at N993 to P1019 is disordered. A coiled-coil region spans residues Q1027–T1060. S1062 carries the phosphoserine modification. The segment at D1117–H1177 adopts an FYVE-type zinc-finger fold. Zn(2+)-binding residues include C1123, C1126, C1139, C1142, C1147, C1150, C1169, and C1172.

It belongs to the protein-tyrosine phosphatase family. Non-receptor class myotubularin subfamily. As to quaternary structure, forms heterodimers with MTMR4 that recruit both CEP55 and PLK1; occurs during early mitosis, regulates the phosphorylation of CEP55 by PLK1 and its recruitment to the midbody where it mediates cell abscission.

The protein localises to the cytoplasm. Its subcellular location is the cytosol. The protein resides in the membrane. The catalysed reaction is a 1,2-diacyl-sn-glycero-3-phospho-(1D-myo-inositol-3,5-bisphosphate) + H2O = a 1,2-diacyl-sn-glycero-3-phospho-(1D-myo-inositol-5-phosphate) + phosphate. It carries out the reaction a 1,2-diacyl-sn-glycero-3-phospho-(1D-myo-inositol-3-phosphate) + H2O = a 1,2-diacyl-sn-glycero-3-phospho-(1D-myo-inositol) + phosphate. The enzyme catalyses 1,2-dihexadecanoyl-sn-glycero-3-phospho-(1D-myo-inositol-3-phosphate) + H2O = 1,2-dihexadecanoyl-sn-glycero-3-phospho-(1D-myo-inositol) + phosphate. It catalyses the reaction 1,2-dioctanoyl-sn-glycero-3-phospho-(1-D-myo-inositol-3-phosphate) + H2O = 1,2-dioctanoyl-sn-glycero-3-phospho-(1D-myo-inositol) + phosphate. The catalysed reaction is 1,2-dihexadecanoyl-sn-glycero-3-phospho-(1D-myo-inositol-3,5-phosphate) + H2O = 1,2-dihexadecanoyl-sn-glycero-3-phospho-(1D-myo-inositol-5-phosphate) + phosphate. Functionally, lipid phosphatase that specifically dephosphorylates the D-3 position of phosphatidylinositol 3-phosphate and phosphatidylinositol 3,5-bisphosphate, generating phosphatidylinositol and phosphatidylinositol 5-phosphate. Decreases the levels of phosphatidylinositol 3-phosphate, a phospholipid found in cell membranes where it acts as key regulator of both cell signaling and intracellular membrane traffic. Could also have a molecular sequestering/adapter activity and regulate biological processes independently of its phosphatase activity. It includes the regulation of midbody abscission during mitotic cytokinesis. In Mus musculus (Mouse), this protein is Phosphatidylinositol-3,5-bisphosphate 3-phosphatase MTMR3.